Consider the following 375-residue polypeptide: MSTAGKVIKCKAAVLWELHKPFTIEDIEVAPPKAHEVRIKMVATGVCRSDDHVVSGTLVTPLPAVLGHEGAGIVESVGEGVTCVKPGDKVIPLFSPQCGECRICKHPESNFCSRSDLLMPRGTLREGTSRFSCKGKQIHNFISTSTFSQYTVVDDIAVAKIDGASPLDKVCLIGCGFSTGYGSAVKVAKVTPGSTCAVFGLGGVGLSVIIGCKAAGAARIIAVDINKDKFAKAKELGATECINPQDYSKPIQEVLQEMTDGGVDFSFEVIGRLDTMTSALLSCHAACGVSVVVGVPPNAQNLSMNPMLLLLGRTWKGAIFGGFKSKDSVPKLVADFMAKKFPLDPLITHVLPFEKINEAFDLLRSGKSIRTVLTF.

At serine 2 the chain carries N-acetylserine. Zn(2+) contacts are provided by cysteine 47, histidine 68, cysteine 98, cysteine 101, cysteine 104, cysteine 112, and cysteine 175. NAD(+) is bound by residues 200-205 (GLGGVG), aspartate 224, and lysine 229. Lysine 234 bears the N6-succinyllysine mark. Residue 293–295 (VGV) participates in NAD(+) binding. Lysine 340 carries the N6-succinyllysine modification. Arginine 370 is a binding site for NAD(+).

It belongs to the zinc-containing alcohol dehydrogenase family. Class-I subfamily. In terms of assembly, dimer of identical or non-identical chains of three types (A, B, C), which are coded by 3 separate genes at different loci. The cofactor is Zn(2+). As to expression, expressed at high levels in the liver, small intestine and eye, at moderate levels in kidney, ovary and uterus, and at low levels in the spinal cord, thymus, heart, stomach mucosa, skin and testis.

It localises to the cytoplasm. It catalyses the reaction a primary alcohol + NAD(+) = an aldehyde + NADH + H(+). The catalysed reaction is a secondary alcohol + NAD(+) = a ketone + NADH + H(+). The chain is Alcohol dehydrogenase 1 (Adh1) from Mus musculus (Mouse).